Here is a 175-residue protein sequence, read N- to C-terminus: Shikimate kinase (175 aa).

ATP is bound at residue 16-21 (GAGKST). S20 is a binding site for Mg(2+). Positions 38, 62, and 84 each coordinate substrate. R122 lines the ATP pocket. Position 141 (R141) interacts with substrate.

This sequence belongs to the shikimate kinase family. As to quaternary structure, monomer. Mg(2+) serves as cofactor.

Its subcellular location is the cytoplasm. It carries out the reaction shikimate + ATP = 3-phosphoshikimate + ADP + H(+). It functions in the pathway metabolic intermediate biosynthesis; chorismate biosynthesis; chorismate from D-erythrose 4-phosphate and phosphoenolpyruvate: step 5/7. Its function is as follows. Catalyzes the specific phosphorylation of the 3-hydroxyl group of shikimic acid using ATP as a cosubstrate. The chain is Shikimate kinase from Legionella pneumophila (strain Paris).